Reading from the N-terminus, the 609-residue chain is Protein kinase PVPK-1 (609 aa).

Residues 1-19 (MESSVNGVDSLSEVQNSVS) are compositionally biased toward polar residues. 2 disordered regions span residues 1-51 (MESS…GHQT) and 80-100 (PTKLSSKQPPLDDSKGCEPNG). Positions 229–565 (FRLLKKLGCG…ATEIKQHPFF (337 aa)) constitute a Protein kinase domain. Residues 235–243 (LGCGDIGSV) and K258 each bind ATP. D354 (proton acceptor) is an active-site residue. A disordered region spans residues 429–448 (GKSKKDKKSKPKNDMHNQVT).

Belongs to the protein kinase superfamily. Ser/Thr protein kinase family.

It carries out the reaction L-seryl-[protein] + ATP = O-phospho-L-seryl-[protein] + ADP + H(+). The enzyme catalyses L-threonyl-[protein] + ATP = O-phospho-L-threonyl-[protein] + ADP + H(+). This is Protein kinase PVPK-1 from Phaseolus vulgaris (Kidney bean).